The sequence spans 283 residues: Mau operon transcriptional activator (283 aa).

Residues 1 to 58 (MNWDDLRVVAAINRCGSFNRAAKMLNVEETTIARRLARLEGSLGCVLFQAVDGQRRPT) form the HTH lysR-type domain. A DNA-binding region (H-T-H motif) is located at residues 18–37 (FNRAAKMLNVEETTIARRLA).

It belongs to the LysR transcriptional regulatory family.

In terms of biological role, transcriptional activator of the mau genes involved in methylamine metabolism. This Paracoccus denitrificans protein is Mau operon transcriptional activator (mauR).